Here is a 262-residue protein sequence, read N- to C-terminus: Shikimate dehydrogenase (NADP(+)) (262 aa).

Shikimate-binding positions include 15–17 (SRS) and T62. The Proton acceptor role is filled by K66. E78 lines the NADP(+) pocket. Residues N87 and D102 each coordinate shikimate. NADP(+) contacts are provided by residues 126–130 (GAGGA), 150–155 (NRTQQR), and M214. Position 216 (Y216) interacts with shikimate. G236 lines the NADP(+) pocket.

This sequence belongs to the shikimate dehydrogenase family. As to quaternary structure, homodimer.

It catalyses the reaction shikimate + NADP(+) = 3-dehydroshikimate + NADPH + H(+). The protein operates within metabolic intermediate biosynthesis; chorismate biosynthesis; chorismate from D-erythrose 4-phosphate and phosphoenolpyruvate: step 4/7. In terms of biological role, involved in the biosynthesis of the chorismate, which leads to the biosynthesis of aromatic amino acids. Catalyzes the reversible NADPH linked reduction of 3-dehydroshikimate (DHSA) to yield shikimate (SA). The sequence is that of Shikimate dehydrogenase (NADP(+)) from Acinetobacter baylyi (strain ATCC 33305 / BD413 / ADP1).